A 135-amino-acid chain; its full sequence is Auxin-responsive protein SAUR66 (135 aa).

This sequence belongs to the ARG7 family.

It is found in the cell membrane. May promote auxin-stimulated organ elongation, such as hypocotyls, stamen filaments and petals. The sequence is that of Auxin-responsive protein SAUR66 from Arabidopsis thaliana (Mouse-ear cress).